We begin with the raw amino-acid sequence, 608 residues long: UvrABC system protein C (608 aa).

Residues 15–93 enclose the GIY-YIG domain; the sequence is HQPGVYRMYN…IKQYLPKYNV (79 aa). In terms of domain architecture, UVR spans 203-238; sequence RQVIQSLVEQMEGASQALNFEKAATIRDQIQSMRRV.

Belongs to the UvrC family. In terms of assembly, interacts with UvrB in an incision complex.

Its subcellular location is the cytoplasm. Its function is as follows. The UvrABC repair system catalyzes the recognition and processing of DNA lesions. UvrC both incises the 5' and 3' sides of the lesion. The N-terminal half is responsible for the 3' incision and the C-terminal half is responsible for the 5' incision. In Aliivibrio salmonicida (strain LFI1238) (Vibrio salmonicida (strain LFI1238)), this protein is UvrABC system protein C.